A 1273-amino-acid polypeptide reads, in one-letter code: Kinesin-like protein KIN-7O (1273 aa).

Residues 3 to 327 enclose the Kinesin motor domain; sequence RIHVSVRARP…LQFASRALRV (325 aa). 79 to 86 lines the ATP pocket; the sequence is GQTNSGKT. Positions 333-408 form a coiled coil; sequence VNEILTDAAL…QRERVLQEQA (76 aa). The disordered stretch occupies residues 452 to 474; sequence SEDQSNVLSRGSSLESARSERET. A compositionally biased stretch (polar residues) spans 453 to 467; sequence EDQSNVLSRGSSLES. Coiled-coil stretches lie at residues 602–674 and 751–1023; these read EAIL…ESEV and VQSS…MEEE.

This sequence belongs to the TRAFAC class myosin-kinesin ATPase superfamily. Kinesin family. KIN-7 subfamily.

This chain is Kinesin-like protein KIN-7O, found in Arabidopsis thaliana (Mouse-ear cress).